Here is a 405-residue protein sequence, read N- to C-terminus: Octaketide synthase 3 (405 aa).

The span at 1–10 (MGSIAESSPL) shows a compositional bias: polar residues. The tract at residues 1 to 22 (MGSIAESSPLMSRENVEGIRKA) is disordered. The active site involves cysteine 176. Residues serine 283 and 320 to 323 (GGRA) contribute to the CoA site.

It belongs to the thiolase-like superfamily. Chalcone/stilbene synthases family. In terms of assembly, homodimer.

It functions in the pathway secondary metabolite biosynthesis; flavonoid biosynthesis. Its function is as follows. Catalyzes the iterative condensations of 8 molecules of malonyl-CoA to produce aromatic octaketides, SEK4 and SEK4b, the products of the minimal polyketide synthase for the benzoisochromanequinone actinorhodin. May be involved in the biosynthesis of the octaketide barbaloin. The polypeptide is Octaketide synthase 3 (PKS5) (Aloe arborescens (Kidachi aloe)).